The primary structure comprises 783 residues: Glucosidase YgjK (783 aa).

The first 22 residues, 1 to 22 (MKIKTILTPVTCALLISFSAHA), serve as a signal peptide directing secretion. The N-terminal domain stretch occupies residues 24 to 254 (NADNYKNVIN…TTLYTTYSHL (231 aa)). Residues 254-299 (LLTAQEVSKEQMQIRDILARPAFYLTASQQRWEEYLKKGLTNPDAT) form a linker region. The segment at 300–783 (PEQTRVAVKA…MLYNDFFRKQ (484 aa)) is a domain. 5 residues coordinate Ca(2+): D454, N456, N458, V460, and E462. Catalysis depends on D524, which acts as the Proton donor. E572 provides a ligand contact to Ca(2+). E750 serves as the catalytic Proton acceptor.

It belongs to the glycosyl hydrolase 63 family.

Functionally, glucoside hydrolase that cleaves the alpha-1,3-glucosidic linkage in nigerose. Has very low activity towards maltooligosaccharides, soluble starch, nigerotriose, kojibiose and trehalose. The sequence is that of Glucosidase YgjK (ygjK) from Escherichia coli (strain K12).